Consider the following 358-residue polypeptide: Sesquiterpene synthase Agr3 (358 aa).

Positions 99, 246, 250, and 254 each coordinate Mg(2+). Residues 99-103 (DNISD) carry the DDXXD motif motif. Residues arginine 334 and tyrosine 335 each contribute to the (2E,6E)-farnesyl diphosphate site.

It belongs to the terpene synthase family. It depends on Mg(2+) as a cofactor.

The catalysed reaction is (2E,6E)-farnesyl diphosphate = alpha-muurolene + diphosphate. It carries out the reaction (2E,6E)-farnesyl diphosphate = gamma-muurolene + diphosphate. The enzyme catalyses (2E,6E)-farnesyl diphosphate = delta-cadinene + diphosphate. Terpene cyclase that catalyzes the cyclization of farnesyl diphosphate (FPP) to various sesquiterpenes, including alpha-muurolene, gamma-muurolene, germacrene, delta-cadinene, delta-cadinol and cubenol. This Cyclocybe aegerita (Black poplar mushroom) protein is Sesquiterpene synthase Agr3.